The chain runs to 514 residues: Proline--tRNA ligase (514 aa).

It belongs to the class-II aminoacyl-tRNA synthetase family. ProS type 3 subfamily. As to quaternary structure, homodimer.

It is found in the cytoplasm. The catalysed reaction is tRNA(Pro) + L-proline + ATP = L-prolyl-tRNA(Pro) + AMP + diphosphate. In terms of biological role, catalyzes the attachment of proline to tRNA(Pro) in a two-step reaction: proline is first activated by ATP to form Pro-AMP and then transferred to the acceptor end of tRNA(Pro). This Erythrobacter litoralis (strain HTCC2594) protein is Proline--tRNA ligase.